The chain runs to 152 residues: Large ribosomal subunit protein uL13 (152 aa).

Residues 130 to 152 are disordered; the sequence is HPHEAQSPEVLDLASKNPKNTRS.

This sequence belongs to the universal ribosomal protein uL13 family. As to quaternary structure, part of the 50S ribosomal subunit.

Functionally, this protein is one of the early assembly proteins of the 50S ribosomal subunit, although it is not seen to bind rRNA by itself. It is important during the early stages of 50S assembly. The sequence is that of Large ribosomal subunit protein uL13 from Dinoroseobacter shibae (strain DSM 16493 / NCIMB 14021 / DFL 12).